An 89-amino-acid chain; its full sequence is MKRVLVKGIQGYQRFISPLKPPTCRFYPSCSHYGIEAIEKHGAVKGSYLTARRLIRCQPFHPGGLDYVPDTFDWKAPLQREKPESQRDD.

The protein belongs to the UPF0161 family.

It is found in the cell membrane. Its function is as follows. Could be involved in insertion of integral membrane proteins into the membrane. The sequence is that of Putative membrane protein insertion efficiency factor from Exiguobacterium sp. (strain ATCC BAA-1283 / AT1b).